Here is a 248-residue protein sequence, read N- to C-terminus: MLYLHDVWVNWFEGEENGYNVCHFYEWRKDDTIELLDQVPLLKVDATLYHYIENELLELPQQLLEDVHHKAYIRKNHERLQQEYCFVVTDGRGIIAVDTIGYNVPIRKSRLIPRQEQMVYEMVENVQAEKYKFQMEETEKEHHILSPSPHIMNGLTRKERQLKQLLFMALDQLHTTKNPAEIRYWYTEWDPSAYGAVQHMEFEDVWKQLYEEAKNGWSEKHEQLCERLVKGQPFFEKLWEMENEQKVN.

It belongs to the UPF0736 family.

The sequence is that of UPF0736 protein Bcer98_0893 from Bacillus cytotoxicus (strain DSM 22905 / CIP 110041 / 391-98 / NVH 391-98).